Reading from the N-terminus, the 476-residue chain is ATP synthase subunit beta, mitochondrial (476 aa).

156 to 163 serves as a coordination point for ATP; that stretch reads GAGVGKTV.

In terms of assembly, F-type ATP synthases have 2 components, the catalytic core F(1) and the membrane-embedded component F(0), linked together by a central stalk and a peripheral stalk. The central stalk, also called rotor shaft, is often seen as part of F(1). The peripheral stalk is seen as part of F(0). F(0) contains the membrane channel next to the rotor. F-type ATP synthases form dimers but each monomer functions independently in ATP generation. The dimer consists of 18 different polypeptides: ATP1 (subunit alpha, part of F(1), 3 molecules per monomer), ATP2 (subunit beta, part of F(1), 3 molecules per monomer), ATP3 (subunit gamma, part of the central stalk), ATP4 (subunit b, part of the peripheral stalk), ATP5/OSCP (subunit 5/OSCP, part of the peripheral stalk), ATP6 (subunit a, part of the peripheral stalk), ATP7 (subunit d, part of the peripheral stalk), ATP8 (subunit 8, part of the peripheral stalk), OLI1 (subunit c, part of the rotor, 10 molecules per monomer), ATP14 (subunit h, part of the peripheral stalk), ATP15 (subunit epsilon, part of the central stalk), ATP16 (subunit delta, part of the central stalk), ATP17 (subunit f, part of the peripheral stalk), ATP18 (subunit i/j, part of the peripheral stalk). Dimer-specific subunits are ATP19 (subunit k, at interface between monomers), ATP20 (subunit g, at interface between monomers), TIM11 (subunit e, at interface between monomers). Also contains subunit L.

It localises to the mitochondrion inner membrane. The enzyme catalyses ATP + H2O + 4 H(+)(in) = ADP + phosphate + 5 H(+)(out). Functionally, mitochondrial membrane ATP synthase (F(1)F(0) ATP synthase or Complex V) produces ATP from ADP in the presence of a proton gradient across the membrane which is generated by electron transport complexes of the respiratory chain. F-type ATP synthases consist of two structural domains, F(1) - containing the extramembraneous catalytic core, and F(0) - containing the membrane proton channel, linked together by a central stalk and a peripheral stalk. During catalysis, ATP synthesis in the catalytic domain of F(1) is coupled via a rotary mechanism of the central stalk subunits to proton translocation. Subunits alpha/ATP1 and beta/ATP2 form the catalytic core in F(1). Rotation of the central stalk against the surrounding alpha/ATP1(3)beta/ATP2(3) subunits leads to hydrolysis of ATP in three separate catalytic sites on the beta/ATP2 subunits. The chain is ATP synthase subunit beta, mitochondrial from Pichia angusta (Yeast).